The sequence spans 667 residues: E3 ubiquitin-protein ligase RNF6 (667 aa).

7 disordered regions span residues 1-25, 75-100, 116-216, 295-355, 396-419, 507-532, and 537-556; these read MDPS…RRWQ, KEQL…RAHS, GNVT…QGSF, FSSR…TPLS, ETRD…STVE, GDAA…GAEM, and EPAP…QLGR. Low complexity predominate over residues 79 to 90; it reads ASQPGSDSAASD. A compositionally biased stretch (polar residues) spans 116–139; that stretch reads GNVTRSGQNGNQSWRAVSRTNPNS. The segment covering 150-163 has biased composition (basic and acidic residues); the sequence is INPDNRGSEMHGED. The span at 191–200 shows a compositional bias: low complexity; it reads SQTSMSSSGP. Positions 296–327 are enriched in polar residues; sequence SSRSRSPIQRQNGTVHHNSQRQGRPVQQTGRN. A compositionally biased stretch (low complexity) spans 516–530; that stretch reads HGRASSQASQAQDGA. Serine 559 carries the phosphoserine modification. Residues 614 to 655 form an RING-type; atypical zinc finger; sequence CSVCISDYVAGNKLRQLPCLHEFHIHCIDRWLSENCTCPVCR.

Belongs to the RNF12 family. In terms of tissue distribution, widely expressed with higher expression in the testis in both germ cells and Sertoli cells.

The protein localises to the nucleus. It localises to the cytoplasm. Its subcellular location is the cell projection. The protein resides in the axon. It is found in the PML body. It carries out the reaction S-ubiquitinyl-[E2 ubiquitin-conjugating enzyme]-L-cysteine + [acceptor protein]-L-lysine = [E2 ubiquitin-conjugating enzyme]-L-cysteine + N(6)-ubiquitinyl-[acceptor protein]-L-lysine.. It participates in protein modification; protein ubiquitination. In terms of biological role, E3 ubiquitin-protein ligase mediating 'Lys-48'-linked polyubiquitination of LIMK1 and its subsequent targeting to the proteasome for degradation. Negatively regulates axonal outgrowth through regulation of the LIMK1 turnover. Mediates 'Lys-6' and 'Lys-27'-linked polyubiquitination of AR/androgen receptor thereby modulating its transcriptional activity. May also bind DNA and function as a transcriptional regulator. Mediates polyubiquitination of QKI in macrophages, leading to its degradation. The protein is E3 ubiquitin-protein ligase RNF6 of Mus musculus (Mouse).